Consider the following 111-residue polypeptide: Fluoride-specific ion channel FluC 3 (111 aa).

3 consecutive transmembrane segments (helical) span residues 26–46 (IPAG…LLTF), 53–73 (VVYL…TFAY), and 91–111 (IFLN…ALML). Na(+)-binding residues include Gly-63 and Thr-66.

The protein belongs to the fluoride channel Fluc/FEX (TC 1.A.43) family.

The protein resides in the cell membrane. The catalysed reaction is fluoride(in) = fluoride(out). Na(+) is not transported, but it plays an essential structural role and its presence is essential for fluoride channel function. Fluoride-specific ion channel. Important for reducing fluoride concentration in the cell, thus reducing its toxicity. The polypeptide is Fluoride-specific ion channel FluC 3 (Methanosarcina acetivorans (strain ATCC 35395 / DSM 2834 / JCM 12185 / C2A)).